Consider the following 443-residue polypeptide: Delta(6)-fatty-acid desaturase fat-3 (443 aa).

One can recognise a Cytochrome b5 heme-binding domain in the interval Met-1–Asp-71. 3 helical membrane passes run Ile-136–Leu-156, Thr-296–Leu-316, and Val-318–Phe-338.

This sequence belongs to the fatty acid desaturase type 1 family.

The protein localises to the membrane. The enzyme catalyses (9Z,12Z)-octadecadienoyl-CoA + 2 Fe(II)-[cytochrome b5] + O2 + 2 H(+) = (6Z,9Z,12Z)-octadecatrienoyl-CoA + 2 Fe(III)-[cytochrome b5] + 2 H2O. It catalyses the reaction (9Z,12Z,15Z)-octadecatrienoyl-CoA + 2 Fe(II)-[cytochrome b5] + O2 + 2 H(+) = (6Z,9Z,12Z,15Z)-octadecatetraenoyl-CoA + 2 Fe(III)-[cytochrome b5] + 2 H2O. Its pathway is lipid metabolism; polyunsaturated fatty acid biosynthesis. Functionally, can function as a Delta(6) fatty acid desaturase. Introduces a double bond in the fatty acid chain 6 carbons away from carboxy terminal to biosynthesize polyunsaturated fatty acids (PUFAs) endogenously (PUFAs are essential for membrane structure and many cellular and physiological processes). Acts on a variety of substrates such as linoleoyl-CoA ((9Z,12Z)-octadecadienoyl-CoA, C18:2n-6) and alpha-linolenoyl-CoA ((9Z,12Z,15Z)-octadecatrienoyl-CoA, C18:3n-3) to produce gamma-linolenoyl-CoA ((6Z,9Z,12Z)-octadecatrienoyl-CoA, C18:3n-6) and (6Z,9Z,12Z,15Z)-octadecatetraenoyl-CoA (18:4n-3) respectively. Unlike plants, Caenorhabditis elegans desaturases seem to use fatty acyl-CoAs as substrates. Plays a role in synaptic vesicle recycling by regulating synaptojanin unc-26 localization at synapses. The sequence is that of Delta(6)-fatty-acid desaturase fat-3 (fat-3) from Caenorhabditis elegans.